The primary structure comprises 89 residues: Progonadoliberin-1 (89 aa).

The N-terminal stretch at methionine 1 to alanine 23 is a signal peptide. Glutamine 24 bears the Pyrrolidone carboxylic acid mark. Position 33 is a glycine amide (glycine 33).

The protein belongs to the GnRH family. In terms of tissue distribution, expressed in the forebrain from larval stages.

It localises to the secreted. Stimulates the secretion of gonadotropins. This chain is Progonadoliberin-1 (gnrh1), found in Xenopus laevis (African clawed frog).